The chain runs to 412 residues: Serine hydroxymethyltransferase (412 aa).

Residues L114 and 118–120 each bind (6S)-5,6,7,8-tetrahydrofolate; that span reads GHL. An N6-(pyridoxal phosphate)lysine modification is found at K223.

The protein belongs to the SHMT family. Homodimer. It depends on pyridoxal 5'-phosphate as a cofactor.

The protein localises to the cytoplasm. The enzyme catalyses (6R)-5,10-methylene-5,6,7,8-tetrahydrofolate + glycine + H2O = (6S)-5,6,7,8-tetrahydrofolate + L-serine. It participates in one-carbon metabolism; tetrahydrofolate interconversion. Its pathway is amino-acid biosynthesis; glycine biosynthesis; glycine from L-serine: step 1/1. Its function is as follows. Catalyzes the reversible interconversion of serine and glycine with tetrahydrofolate (THF) serving as the one-carbon carrier. This reaction serves as the major source of one-carbon groups required for the biosynthesis of purines, thymidylate, methionine, and other important biomolecules. Also exhibits THF-independent aldolase activity toward beta-hydroxyamino acids, producing glycine and aldehydes, via a retro-aldol mechanism. This is Serine hydroxymethyltransferase from Mesoplasma florum (strain ATCC 33453 / NBRC 100688 / NCTC 11704 / L1) (Acholeplasma florum).